The primary structure comprises 353 residues: Quinolinate synthase (353 aa).

Iminosuccinate is bound by residues His47 and Ser68. Cys113 serves as a coordination point for [4Fe-4S] cluster. Iminosuccinate contacts are provided by residues 139-141 (YAN) and Ser156. Residue Cys200 participates in [4Fe-4S] cluster binding. Iminosuccinate contacts are provided by residues 226 to 228 (HPE) and Thr243. Cys297 contacts [4Fe-4S] cluster.

The protein belongs to the quinolinate synthase family. Type 1 subfamily. Requires [4Fe-4S] cluster as cofactor.

It is found in the cytoplasm. It carries out the reaction iminosuccinate + dihydroxyacetone phosphate = quinolinate + phosphate + 2 H2O + H(+). It participates in cofactor biosynthesis; NAD(+) biosynthesis; quinolinate from iminoaspartate: step 1/1. Catalyzes the condensation of iminoaspartate with dihydroxyacetone phosphate to form quinolinate. The sequence is that of Quinolinate synthase from Pectobacterium atrosepticum (strain SCRI 1043 / ATCC BAA-672) (Erwinia carotovora subsp. atroseptica).